We begin with the raw amino-acid sequence, 349 residues long: MADKMFKALLWAFATAVVMAEAVRGQLVPCYFVFGDSVFDNGNNNELDTLAKVNYSPYGIDFARGPTGRFSNGRNIPDFIAEELRISYDIPPFTRASTEQAHTGINYASGGAGLLEETSQHLGERISFEKQITNHRKMIMTAGVPPEKLKKCLYTINIGSNDYLNNYFMPAPYTTNENFSFDEYADFLIQSYRSYLKSLYVLGARKVAVFGVSKLGCTPRMIASHGGGKGCATEVNKAVEPFNKKLKDLISEFNRISVVDHAKFTFVDLFSSQNPIEYFILGFTVTDKSCCTVESGQELCAANKPVCPNRERYVYWDNVHSTEAANKVVVKAAFAGLITSPISILLLVL.

The N-terminal stretch at 1–25 (MADKMFKALLWAFATAVVMAEAVRG) is a signal peptide. Catalysis depends on serine 37, which acts as the Nucleophile. A glycan (N-linked (GlcNAc...) asparagine) is linked at asparagine 178. Active-site residues include aspartate 317 and histidine 320.

It belongs to the 'GDSL' lipolytic enzyme family.

The protein resides in the secreted. The sequence is that of GDSL esterase/lipase At2g19060 from Arabidopsis thaliana (Mouse-ear cress).